The sequence spans 325 residues: tRNA uridine(34) hydroxylase (325 aa).

The 97-residue stretch at 122-218 (EENRCLVLDV…YGQAMGTGKW (97 aa)) folds into the Rhodanese domain. Cys-178 acts as the Cysteine persulfide intermediate in catalysis.

It belongs to the TrhO family.

The catalysed reaction is uridine(34) in tRNA + AH2 + O2 = 5-hydroxyuridine(34) in tRNA + A + H2O. In terms of biological role, catalyzes oxygen-dependent 5-hydroxyuridine (ho5U) modification at position 34 in tRNAs. The protein is tRNA uridine(34) hydroxylase of Chlamydia felis (strain Fe/C-56) (Chlamydophila felis).